Here is a 507-residue protein sequence, read N- to C-terminus: Histidine ammonia-lyase (507 aa).

Residues 141–143 (ASG) constitute a cross-link (5-imidazolinone (Ala-Gly)). Position 142 is a 2,3-didehydroalanine (Ser) (Ser-142).

This sequence belongs to the PAL/histidase family. Contains an active site 4-methylidene-imidazol-5-one (MIO), which is formed autocatalytically by cyclization and dehydration of residues Ala-Ser-Gly.

The protein localises to the cytoplasm. The catalysed reaction is L-histidine = trans-urocanate + NH4(+). The protein operates within amino-acid degradation; L-histidine degradation into L-glutamate; N-formimidoyl-L-glutamate from L-histidine: step 1/3. The sequence is that of Histidine ammonia-lyase from Paraburkholderia phytofirmans (strain DSM 17436 / LMG 22146 / PsJN) (Burkholderia phytofirmans).